The following is a 322-amino-acid chain: Phosphoenolpyruvate transferase (322 aa).

7,8-didemethyl-8-hydroxy-5-deazariboflavin is bound at residue Asp-58.

Belongs to the CofD family. As to quaternary structure, homodimer. It depends on Mg(2+) as a cofactor.

The enzyme catalyses enolpyruvoyl-2-diphospho-5'-guanosine + 7,8-didemethyl-8-hydroxy-5-deazariboflavin = dehydro coenzyme F420-0 + GMP + H(+). It functions in the pathway cofactor biosynthesis; coenzyme F420 biosynthesis. In terms of biological role, catalyzes the transfer of the phosphoenolpyruvate moiety from enoylpyruvoyl-2-diphospho-5'-guanosine (EPPG) to 7,8-didemethyl-8-hydroxy-5-deazariboflavin (FO) with the formation of dehydro coenzyme F420-0 and GMP. This is Phosphoenolpyruvate transferase from Thermobifida fusca (strain YX).